A 436-amino-acid polypeptide reads, in one-letter code: Acetyl-CoA decarbonylase/synthase complex subunit delta 1 (436 aa).

Belongs to the CdhD family. Heterodimer of delta and gamma chains. The ACDS complex is made up of alpha, epsilon, beta, gamma and delta chains with a probable stoichiometry of (alpha(2)epsilon(2))(4)-beta(8)-(gamma(1)delta(1))(8) (Potential).

Its pathway is one-carbon metabolism; methanogenesis from acetate. Its function is as follows. Part of a complex that catalyzes the reversible cleavage of acetyl-CoA, allowing growth on acetate as sole source of carbon and energy. Probably maintains the overall quaternary structure of the ACDS complex. In Methanosarcina acetivorans (strain ATCC 35395 / DSM 2834 / JCM 12185 / C2A), this protein is Acetyl-CoA decarbonylase/synthase complex subunit delta 1 (cdhD1).